We begin with the raw amino-acid sequence, 394 residues long: MKRQNVRTLALIVCTFTYLLVGAAVFDALESEPELIERQRLELRQQELRARYNLSQGGYEELERVVLRLKPHKAGVQWRFAGSFYFAITVITTIGYGHAAPSTDGGKVFCMFYALLGIPLTLVMFQSLGERINTLVRYLLHRAKKGLGMRRADVSMANMVLIGFFSCISTLCIGAAAFSHYEHWTFFQAYYYCFITLTTIGFGDYVALQKDQALQTQPQYVAFSFVYILTGLTVIGAFLNLVVLRFMTMNAEDEKRDAEHRALLTRNGQAGGGGGGGSAHTTDTASSTAAAGGGGFRNVYAEVLHFQSMCSCLWYKSREKLQYSIPMIIPRDLSTSDTCVEQSHSSPGGGGRYSDTPSRRCLCSGAPRSAISSVSTGLHSLSTFRGLMKRRSSV.

Over methionine 1–threonine 8 the chain is Cytoplasmic. A helical transmembrane segment spans residues leucine 9–leucine 29. Asparagine 53 carries N-linked (GlcNAc...) asparagine glycosylation. The segment at residues tryptophan 78–proline 101 is an intramembrane region (pore-forming). Threonine 93, isoleucine 94, glycine 95, and tyrosine 96 together coordinate K(+). The selectivity filter 1 stretch occupies residues threonine 93–histidine 98. Residues valine 108–leucine 128 form a helical membrane-spanning segment. Over glycine 129–asparagine 158 the chain is Cytoplasmic. The helical transmembrane segment at methionine 159–serine 179 threads the bilayer. An intramembrane region (pore-forming) is located at residues tryptophan 184–alanine 207. 4 residues coordinate K(+): threonine 199, isoleucine 200, glycine 201, and phenylalanine 202. The interval threonine 199–aspartate 204 is selectivity filter 2. Residues phenylalanine 223–valine 243 traverse the membrane as a helical segment. The tract at residues valine 243–threonine 248 is X-gate. Over leucine 244–valine 394 the chain is Cytoplasmic. 2 disordered regions span residues arginine 266–serine 286 and threonine 338–proline 357. Gly residues predominate over residues glutamine 269–serine 278.

The protein belongs to the two pore domain potassium channel (TC 1.A.1.8) family. As to quaternary structure, homodimer. Heterodimer with KCNK1. Heterodimer with KCNK9. In terms of tissue distribution, widespread expression in adult. Strongest expression in pancreas and placenta. Lower expression in brain, lung, prostate, heart, kidney, uterus, small intestine and colon.

It is found in the cell membrane. It carries out the reaction K(+)(in) = K(+)(out). The catalysed reaction is Na(+)(in) = Na(+)(out). Inhibited by external acidification, diacylglycerol and anandamide. Activated by halothane and isoflurane. In terms of biological role, k(+) channel that conducts voltage-dependent outward rectifying currents upon membrane depolarization. Voltage sensing is coupled to K(+) electrochemical gradient in an 'ion flux gating' mode where outward but not inward ion flow opens the gate. Changes ion selectivity and becomes permeable to Na(+) ions in response to extracellular acidification. Protonation of the pH sensor His-98 stabilizes C-type inactivation conformation likely converting the channel from outward K(+)-conducting, to inward Na(+)-conducting to nonconductive state. Homo- and heterodimerizes to form functional channels with distinct regulatory and gating properties. Allows K(+) currents with fast-gating kinetics important for the repolarization and hyperpolarization phases of action potentials. In cerebellar granule cells, heteromeric KCNK3:KCNK9 channel may hyperpolarize the resting membrane potential to limit intrinsic neuronal excitability, but once the action potential threshold is reached, it may support high-frequency action potential firing and increased neuronal excitability. Dispensable for central chemosensory respiration i.e. breathing controlled by brainstem CO2/pH, it rather conducts pH-sensitive currents and controls the firing rate of serotonergic raphe neurons involved in potentiation of the respiratory chemoreflex. Additionally, imparts chemosensitivity to type 1 cells in carotid bodies which respond to a decrease in arterial oxygen pressure or an increase in carbon dioxide pressure or pH to initiate adaptive changes in pulmonary ventilation. In adrenal gland, contributes to the maintenance of a hyperpolarized resting membrane potential of aldosterone-producing cells at zona glomerulosa and limits aldosterone release as part of a regulatory mechanism that controls arterial blood pressure and electrolyte homeostasis. In brown adipocytes, mediates K(+) efflux that counteracts norepinephrine-induced membrane depolarization, limits Ca(2+) efflux and downstream cAMP and PKA signaling, ultimately attenuating lipid oxidation and adaptive thermogenesis. This Homo sapiens (Human) protein is Potassium channel subfamily K member 3.